A 912-amino-acid polypeptide reads, in one-letter code: Brevican core protein (912 aa).

Positions 1–22 are cleaved as a signal peptide; that stretch reads MAPLFLPLLATLVLAWIPVALA. One can recognise an Ig-like V-type domain in the interval 36 to 155; sequence RVRIAGDAPL…SSDAVEVKVK (120 aa). 5 disulfides stabilise this stretch: Cys-57-Cys-137, Cys-179-Cys-250, Cys-203-Cys-224, Cys-277-Cys-352, and Cys-301-Cys-322. The N-linked (GlcNAc...) asparagine glycan is linked to Asn-130. 2 Link domains span residues 157-252 and 257-354; these read VVFL…YCYA and GELF…YCFR. Asn-337 carries N-linked (GlcNAc...) asparagine glycosylation. 2 disordered regions span residues 408–427 and 438–651; these read IPII…PAEA and SIVP…SGDC. Ser-418 bears the Phosphoserine mark. Ser-418 is a glycosylation site (O-linked (Xyl...) (chondroitin sulfate) serine). The segment covering 448 to 463 has biased composition (basic and acidic residues); sequence EEGKVLEQEEKYRGEE. The segment covering 464–478 has biased composition (acidic residues); that stretch reads EKEEEEEEEEVEDEA. A compositionally biased stretch (pro residues) spans 520–537; it reads VSPPPYDEPEAPRPPRVL. The segment covering 603-617 has biased composition (basic and acidic residues); that stretch reads GDTRDLETPSEENSR. In terms of domain architecture, EGF-like spans 647-683; that stretch reads SSGDCVPSPCHNGGTCLEEEEGVRCLCLPGYGGDLCD. 8 disulfide bridges follow: Cys-651–Cys-662, Cys-656–Cys-671, Cys-673–Cys-682, Cys-689–Cys-700, Cys-717–Cys-809, Cys-785–Cys-801, Cys-816–Cys-859, and Cys-845–Cys-872. The 129-residue stretch at 683–811 folds into the C-type lectin domain; sequence DVGLHFCSPG…NYHLSYTCKM (129 aa). The region spanning 814 to 874 is the Sushi domain; that stretch reads VSCGPPPELP…WGLPQISCVP (61 aa).

It belongs to the aggrecan/versican proteoglycan family. Interacts with TNR. Post-translationally, O-glycosylated; contains chondroitin sulfate. As to expression, brain; expressed in cerebellar astrocytes but not in neurons.

It is found in the secreted. The protein localises to the extracellular space. Its subcellular location is the extracellular matrix. May play a role in the terminally differentiating and the adult nervous system during postnatal development. Could stabilize interactions between hyaluronan (HA) and brain proteoglycans. This chain is Brevican core protein (BCAN), found in Bos taurus (Bovine).